We begin with the raw amino-acid sequence, 49 residues long: Photosystem I reaction center subunit IX (49 aa).

A helical transmembrane segment spans residues 14–34; sequence FISTAPVAATIWLTITAGILI.

Belongs to the PsaJ family.

It is found in the cellular thylakoid membrane. May help in the organization of the PsaE and PsaF subunits. The sequence is that of Photosystem I reaction center subunit IX from Nostoc punctiforme (strain ATCC 29133 / PCC 73102).